The primary structure comprises 232 residues: Ribonuclease 3 (232 aa).

The RNase III domain occupies 2-135 (IKALEDDLSQ…FIGALYLDQG (134 aa)). Glu-48 serves as a coordination point for Mg(2+). Asp-52 is a catalytic residue. Mg(2+)-binding residues include Asp-121 and Glu-124. Glu-124 is a catalytic residue. A DRBM domain is found at 161–230 (DHKSELQELL…ANQALQLLRR (70 aa)).

Belongs to the ribonuclease III family. As to quaternary structure, homodimer. The cofactor is Mg(2+).

The protein resides in the cytoplasm. The enzyme catalyses Endonucleolytic cleavage to 5'-phosphomonoester.. Digests double-stranded RNA. Involved in the processing of primary rRNA transcript to yield the immediate precursors to the large and small rRNAs (23S and 16S). Processes some mRNAs, and tRNAs when they are encoded in the rRNA operon. Processes pre-crRNA and tracrRNA of type II CRISPR loci if present in the organism. This is Ribonuclease 3 from Pediococcus pentosaceus (strain ATCC 25745 / CCUG 21536 / LMG 10740 / 183-1w).